A 222-amino-acid chain; its full sequence is Charged multivesicular body protein 2a (222 aa).

The residue at position 1 (M1) is an N-acetylmethionine. Residues E12–Q53 are a coiled coil. The segment at M56–D222 is interaction with VPS4B. S184 carries the post-translational modification Phosphoserine. Position 185 is a phosphothreonine (T185). S188, S190, and S203 each carry phosphoserine. Positions G195 to D222 form a coiled coil. Positions A210–R220 match the MIT-interacting motif motif. The interaction with VTA1 stretch occupies residues K217–D222.

It belongs to the SNF7 family. Probable core component of the endosomal sorting required for transport complex III (ESCRT-III). ESCRT-III components are thought to multimerize to form a flat lattice on the perimeter membrane of the endosome. Several assembly forms of ESCRT-III may exist that interact and act sequentially. In vitro, heteromerizes with CHMP3 (but not CHMP4) to form helical tubular structures that expose membrane-interacting sites on the outside whereas VPS4B can associate on the inside of the tubule. Interacts with CHMP1B, CHMP2B, CHMP3, CHMP4A, CHMP4B, CHMP4C and CHMP5. Interacts with VPS4A; the interaction is direct. Interacts with VPS4B; the interaction is direct. Interacts with MITD1. Interacts with VTA1; the interaction probably involves the open conformation of CHMP2A. ISGylated in a CHMP5-dependent manner. Isgylation weakens and inhibits its interactions with VPS4A and VTA1 respectively.

The protein resides in the late endosome membrane. The protein localises to the nucleus envelope. In terms of biological role, probable core component of the endosomal sorting required for transport complex III (ESCRT-III) which is involved in multivesicular bodies (MVBs) formation and sorting of endosomal cargo proteins into MVBs. MVBs contain intraluminal vesicles (ILVs) that are generated by invagination and scission from the limiting membrane of the endosome and mostly are delivered to lysosomes enabling degradation of membrane proteins, such as stimulated growth factor receptors, lysosomal enzymes and lipids. The MVB pathway appears to require the sequential function of ESCRT-O, -I,-II and -III complexes. ESCRT-III proteins mostly dissociate from the invaginating membrane before the ILV is released. The ESCRT machinery also functions in topologically equivalent membrane fission events, such as the terminal stages of cytokinesis. Together with SPAST, the ESCRT-III complex promotes nuclear envelope sealing and mitotic spindle disassembly during late anaphase. Recruited to the reforming nuclear envelope (NE) during anaphase by LEMD2. ESCRT-III proteins are believed to mediate the necessary vesicle extrusion and/or membrane fission activities, possibly in conjunction with the AAA ATPase VPS4. Its function is as follows. (Microbial infection) The ESCRT machinery functions in topologically equivalent membrane fission events, such as the budding of enveloped viruses (HIV-1 and other lentiviruses). Involved in HIV-1 p6- and p9-dependent virus release. This chain is Charged multivesicular body protein 2a (CHMP2A), found in Homo sapiens (Human).